We begin with the raw amino-acid sequence, 44 residues long: Protein Tat (44 aa).

The interval 1 to 44 is disordered; it reads APEDSQSHQVSLSKQPASQAGGDPTGPKESKKKVESETETDPVP. The span at 7–18 shows a compositional bias: polar residues; the sequence is SHQVSLSKQPAS. Lys14 participates in a covalent cross-link: Glycyl lysine isopeptide (Lys-Gly) (interchain with G-Cter in ubiquitin). The short motif at 21-23 is the Cell attachment site element; it reads GGD. The span at 26–36 shows a compositional bias: basic and acidic residues; the sequence is GPKESKKKVES.

It belongs to the lentiviruses Tat family. As to quaternary structure, interacts with host CCNT1. Associates with the P-TEFb complex composed at least of Tat, P-TEFb (CDK9 and CCNT1), TAR RNA, RNA Pol II. Recruits the HATs CREBBP, TAF1/TFIID, EP300, PCAF and GCN5L2. Interacts with host KAT5/Tip60; this interaction targets the latter to degradation. Interacts with the host deacetylase SIRT1. Interacts with host capping enzyme RNGTT; this interaction stimulates RNGTT. Binds to host KDR, and to the host integrins ITGAV/ITGB3 and ITGA5/ITGB1. Interacts with host KPNB1/importin beta-1 without previous binding to KPNA1/importin alpha-1. Interacts with EIF2AK2. Interacts with host nucleosome assembly protein NAP1L1; this interaction may be required for the transport of Tat within the nucleus, since the two proteins interact at the nuclear rim. Interacts with host C1QBP/SF2P32; this interaction involves lysine-acetylated Tat. Interacts with the host chemokine receptors CCR2, CCR3 and CXCR4. Interacts with host DPP4/CD26; this interaction may trigger an anti-proliferative effect. Interacts with host LDLR. Interacts with the host extracellular matrix metalloproteinase MMP1. Interacts with host PRMT6; this interaction mediates Tat's methylation. Interacts with, and is ubiquitinated by MDM2/Hdm2. Interacts with host PSMC3 and HTATIP2. Interacts with STAB1; this interaction may overcome SATB1-mediated repression of IL2 and IL2RA (interleukin) in T cells by binding to the same domain than HDAC1. Interacts (when acetylated) with human CDK13, thereby increasing HIV-1 mRNA splicing and promoting the production of the doubly spliced HIV-1 protein Nef. In terms of processing, acetylation by EP300, CREBBP, GCN5L2/GCN5 and PCAF regulates the transactivation activity of Tat. Phosphorylated by EIF2AK2 on serine and threonine residues adjacent to the basic region important for TAR RNA binding and function. Phosphorylation of Tat by EIF2AK2 is dependent on the prior activation of EIF2AK2 by dsRNA. Post-translationally, asymmetrical arginine methylation by host PRMT6 seems to diminish the transactivation capacity of Tat and affects the interaction with host CCNT1. In terms of processing, polyubiquitination by MDM2 does not target Tat to degradation, but activates its transactivation function and fosters interaction with CCNT1 and TAR RNA.

Its subcellular location is the host nucleus. It is found in the host nucleolus. The protein resides in the host cytoplasm. The protein localises to the secreted. In terms of biological role, transcriptional activator that increases RNA Pol II processivity, thereby increasing the level of full-length viral transcripts. Recognizes a hairpin structure at the 5'-LTR of the nascent viral mRNAs referred to as the transactivation responsive RNA element (TAR) and recruits the cyclin T1-CDK9 complex (P-TEFb complex) that will in turn hyperphosphorylate the RNA polymerase II to allow efficient elongation. The CDK9 component of P-TEFb and other Tat-activated kinases hyperphosphorylate the C-terminus of RNA Pol II that becomes stabilized and much more processive. Other factors such as HTATSF1/Tat-SF1, SUPT5H/SPT5, and HTATIP2 are also important for Tat's function. Besides its effect on RNA Pol II processivity, Tat induces chromatin remodeling of proviral genes by recruiting the histone acetyltransferases (HATs) CREBBP, EP300 and PCAF to the chromatin. This also contributes to the increase in proviral transcription rate, especially when the provirus integrates in transcriptionally silent region of the host genome. To ensure maximal activation of the LTR, Tat mediates nuclear translocation of NF-kappa-B by interacting with host RELA. Through its interaction with host TBP, Tat may also modulate transcription initiation. Tat can reactivate a latently infected cell by penetrating in it and transactivating its LTR promoter. In the cytoplasm, Tat is thought to act as a translational activator of HIV-1 mRNAs. Extracellular circulating Tat can be endocytosed by surrounding uninfected cells via the binding to several surface receptors such as CD26, CXCR4, heparan sulfate proteoglycans (HSPG) or LDLR. Neurons are rarely infected, but they internalize Tat via their LDLR. Endosomal low pH allows Tat to cross the endosome membrane to enter the cytosol and eventually further translocate into the nucleus, thereby inducing severe cell dysfunctions ranging from cell activation to cell death. Through its interaction with nuclear HATs, Tat is potentially able to control the acetylation-dependent cellular gene expression. Tat seems to inhibit the HAT activity of KAT5/Tip60 and TAF1, and consequently modify the expression of specific cellular genes. Modulates the expression of many cellular genes involved in cell survival, proliferation or in coding for cytokines (such as IL10) or cytokine receptors. May be involved in the derepression of host interleukin IL2 expression. Mediates the activation of cyclin-dependent kinases and dysregulation of microtubule network. Tat plays a role in T-cell and neurons apoptosis. Tat induced neurotoxicity and apoptosis probably contribute to neuroAIDS. Host extracellular matrix metalloproteinase MMP1 cleaves Tat and decreases Tat's mediated neurotoxicity. Circulating Tat also acts as a chemokine-like and/or growth factor-like molecule that binds to specific receptors on the surface of the cells, affecting many cellular pathways. In the vascular system, Tat binds to ITGAV/ITGB3 and ITGA5/ITGB1 integrins dimers at the surface of endothelial cells and competes with bFGF for heparin-binding sites, leading to an excess of soluble bFGF. Binds to KDR/VEGFR-2. All these Tat-mediated effects enhance angiogenesis in Kaposi's sarcoma lesions. The protein is Protein Tat of Human immunodeficiency virus type 1 group M subtype B (isolate BRVA) (HIV-1).